The primary structure comprises 104 residues: Large ribosomal subunit protein uL24 (104 aa).

Over residues 82 to 92 the composition is skewed to basic and acidic residues; that stretch reads RIGYRTDENGK. Residues 82-104 form a disordered region; the sequence is RIGYRTDENGKRVRISRRNGKDI. Basic residues predominate over residues 93-104; it reads RVRISRRNGKDI.

This sequence belongs to the universal ribosomal protein uL24 family. As to quaternary structure, part of the 50S ribosomal subunit.

Functionally, one of two assembly initiator proteins, it binds directly to the 5'-end of the 23S rRNA, where it nucleates assembly of the 50S subunit. In terms of biological role, one of the proteins that surrounds the polypeptide exit tunnel on the outside of the subunit. This Nocardia farcinica (strain IFM 10152) protein is Large ribosomal subunit protein uL24.